A 360-amino-acid chain; its full sequence is Peptide chain release factor 1 (360 aa).

Glutamine 235 carries the N5-methylglutamine modification. Residues 284 to 293 (QRRQQEESST) are compositionally biased toward basic and acidic residues. Residues 284-311 (QRRQQEESSTRRNLLGSGDRSDRIRTYN) form a disordered region.

The protein belongs to the prokaryotic/mitochondrial release factor family. In terms of processing, methylated by PrmC. Methylation increases the termination efficiency of RF1.

It is found in the cytoplasm. Functionally, peptide chain release factor 1 directs the termination of translation in response to the peptide chain termination codons UAG and UAA. This chain is Peptide chain release factor 1, found in Sodalis glossinidius (strain morsitans).